A 283-amino-acid polypeptide reads, in one-letter code: D-alanine aminotransferase (283 aa).

Tyrosine 31 serves as a coordination point for substrate. Arginine 50 lines the pyridoxal 5'-phosphate pocket. Substrate contacts are provided by arginine 98 and histidine 100. Lysine 144 serves as the catalytic Proton acceptor. The residue at position 144 (lysine 144) is an N6-(pyridoxal phosphate)lysine. Residue glutamate 176 coordinates pyridoxal 5'-phosphate.

This sequence belongs to the class-IV pyridoxal-phosphate-dependent aminotransferase family. Homodimer. Pyridoxal 5'-phosphate is required as a cofactor.

It carries out the reaction D-alanine + 2-oxoglutarate = D-glutamate + pyruvate. Acts on the D-isomers of alanine, leucine, aspartate, glutamate, aminobutyrate, norvaline and asparagine. The enzyme transfers an amino group from a substrate D-amino acid to the pyridoxal phosphate cofactor to form pyridoxamine and an alpha-keto acid in the first half-reaction. The second half-reaction is the reverse of the first, transferring the amino group from the pyridoxamine to a second alpha-keto acid to form the product D-amino acid via a ping-pong mechanism. This is an important process in the formation of D-alanine and D-glutamate, which are essential bacterial cell wall components. The polypeptide is D-alanine aminotransferase (dat) (Bacillus licheniformis).